A 216-amino-acid chain; its full sequence is N-(5'-phosphoribosyl)anthranilate isomerase (216 aa).

Belongs to the TrpF family.

The catalysed reaction is N-(5-phospho-beta-D-ribosyl)anthranilate = 1-(2-carboxyphenylamino)-1-deoxy-D-ribulose 5-phosphate. Its pathway is amino-acid biosynthesis; L-tryptophan biosynthesis; L-tryptophan from chorismate: step 3/5. This chain is N-(5'-phosphoribosyl)anthranilate isomerase, found in Methanopyrus kandleri (strain AV19 / DSM 6324 / JCM 9639 / NBRC 100938).